The chain runs to 985 residues: Vacuolar membrane protease (985 aa).

At 1-20 (MASSRAQRFNPIAFTPWPVT) the chain is on the cytoplasmic side. The helical transmembrane segment at 21-41 (CITTIVYLALLIPILVINLVV) threads the bilayer. The Vacuolar portion of the chain corresponds to 42–388 (PSAPETNPKG…MFGTAFAVFR (347 aa)). Residues Asn53, Asn116, and Asn119 are each glycosylated (N-linked (GlcNAc...) asparagine). Zn(2+) contacts are provided by His175 and Asp187. Catalysis depends on Glu221, which acts as the Proton acceptor. A Zn(2+)-binding site is contributed by Glu222. N-linked (GlcNAc...) asparagine glycosylation occurs at Asn238. Positions 247 and 320 each coordinate Zn(2+). The chain crosses the membrane as a helical span at residues 389–409 (LHTLFAISVALLVIAPLVIFV). Over 410–440 (TNRMYLFSMSKSLEGTGDQVSLRGLRGFSRT) the chain is Cytoplasmic. A helical membrane pass occupies residues 441–461 (PIILVTATTIPICLAYLLEKV). Topologically, residues 462-470 (NPYIVHSSQ) are vacuolar. A helical membrane pass occupies residues 471–491 (FSVWSMMFSAWIFLAWFLACA). Residues 492–502 (ADFFRPSALHR) lie on the Cytoplasmic side of the membrane. The chain crosses the membrane as a helical span at residues 503–523 (AYSYTWIFIATWIMLVINTVY). The Vacuolar portion of the chain corresponds to 524 to 527 (ANQK). Residues 528-548 (GIAAGYFLLFYFAGAFLATWI) traverse the membrane as a helical segment. Residues 549–666 (SYLELFALPR…TLPRWTWVLQ (118 aa)) are Cytoplasmic-facing. The segment at 563 to 612 (ARQTTGRRPSSLSSRLLTSSADELRSNASPSTAEFPGAAGEDTDPTESTS) is disordered. The span at 566-582 (TTGRRPSSLSSRLLTSS) shows a compositional bias: low complexity. Residues 667–687 (LLLLAPIVLILVGQLALFLTA) form a helical membrane-spanning segment. The Vacuolar segment spans residues 688–700 (SMCQVGSDGVSTF). The helical transmembrane segment at 701 to 721 (VVYLACAVFTTLLCIPLFPLI) threads the bilayer. Residues 722-727 (HRFTYH) are Cytoplasmic-facing. Residues 728–748 (IPTFLFLVFIGTLIYNLVAFP) traverse the membrane as a helical segment. Topologically, residues 749–985 (FSPANRLKTF…VEASHSFTIQ (237 aa)) are vacuolar. Residues Asn767, Asn795, and Asn839 are each glycosylated (N-linked (GlcNAc...) asparagine).

Belongs to the peptidase M28 family. Zn(2+) is required as a cofactor.

It is found in the vacuole membrane. May be involved in vacuolar sorting and osmoregulation. This chain is Vacuolar membrane protease, found in Ajellomyces capsulatus (strain G186AR / H82 / ATCC MYA-2454 / RMSCC 2432) (Darling's disease fungus).